Here is a 629-residue protein sequence, read N- to C-terminus: tRNA uridine 5-carboxymethylaminomethyl modification enzyme MnmG (629 aa).

FAD is bound by residues 13–18 (GGGHAG), Val-125, and Ser-180. Residue 273 to 287 (GPRYCPSIEDKVMRF) coordinates NAD(+). Position 370 (Gln-370) interacts with FAD.

Belongs to the MnmG family. In terms of assembly, homodimer. Heterotetramer of two MnmE and two MnmG subunits. The cofactor is FAD.

It localises to the cytoplasm. Its function is as follows. NAD-binding protein involved in the addition of a carboxymethylaminomethyl (cmnm) group at the wobble position (U34) of certain tRNAs, forming tRNA-cmnm(5)s(2)U34. The protein is tRNA uridine 5-carboxymethylaminomethyl modification enzyme MnmG of Psychromonas ingrahamii (strain DSM 17664 / CCUG 51855 / 37).